Consider the following 555-residue polypeptide: Urocanate hydratase (555 aa).

Residues 51–52 (GG), Q129, 175–177 (GMG), E195, 262–266 (QTSAH), 272–273 (YL), and Y321 contribute to the NAD(+) site. C409 is a catalytic residue. G491 contacts NAD(+).

The protein belongs to the urocanase family. NAD(+) serves as cofactor.

It localises to the cytoplasm. The enzyme catalyses 4-imidazolone-5-propanoate = trans-urocanate + H2O. It functions in the pathway amino-acid degradation; L-histidine degradation into L-glutamate; N-formimidoyl-L-glutamate from L-histidine: step 2/3. In terms of biological role, catalyzes the conversion of urocanate to 4-imidazolone-5-propionate. The protein is Urocanate hydratase of Stenotrophomonas maltophilia (strain R551-3).